Consider the following 125-residue polypeptide: Cu-Zn superoxide dismutase-like protein OPG175 (125 aa).

Residues Cys-52 and Cys-102 are joined by a disulfide bond.

It belongs to the Cu-Zn superoxide dismutase family.

Its subcellular location is the virion. The protein localises to the host cytoplasm. In terms of biological role, superoxide dismutase-like protein with no enzymatic activity. This chain is Cu-Zn superoxide dismutase-like protein OPG175 (OPG175), found in Cowpox virus (strain Brighton Red) (CPV).